Here is a 347-residue protein sequence, read N- to C-terminus: uncharacterized protein (347 aa).

Topologically, residues 1–44 (MWNPKKKSEALAKFKSFPYPKPGTSNVLDSKEGDTRRKYFTKTH) are cytoplasmic. A helical; Signal-anchor for type II membrane protein membrane pass occupies residues 45-62 (LHRLFVFVVLLLCSGYFL). The Lumenal segment spans residues 63–347 (KHTLLTRPKE…RGWRKLVPFL (285 aa)).

The protein belongs to the glycosyltransferase 34 family.

Its subcellular location is the endoplasmic reticulum membrane. This is an uncharacterized protein from Schizosaccharomyces pombe (strain 972 / ATCC 24843) (Fission yeast).